The primary structure comprises 728 residues: Catalase-peroxidase 1 (728 aa).

Residues 91–218 (WHGAGTYRIA…LAAVQMGLIY (128 aa)) constitute a cross-link (tryptophyl-tyrosyl-methioninium (Trp-Tyr) (with M-244)). Catalysis depends on H92, which acts as the Proton acceptor. The segment at residues 218–244 (YVNPEGPDGKPDPVAAARDIRDTFARM) is a cross-link (tryptophyl-tyrosyl-methioninium (Tyr-Met) (with W-91)). H259 is a heme b binding site.

This sequence belongs to the peroxidase family. Peroxidase/catalase subfamily. Homodimer or homotetramer. Requires heme b as cofactor. In terms of processing, formation of the three residue Trp-Tyr-Met cross-link is important for the catalase, but not the peroxidase activity of the enzyme.

It carries out the reaction H2O2 + AH2 = A + 2 H2O. The enzyme catalyses 2 H2O2 = O2 + 2 H2O. In terms of biological role, bifunctional enzyme with both catalase and broad-spectrum peroxidase activity. This is Catalase-peroxidase 1 from Burkholderia vietnamiensis (strain G4 / LMG 22486) (Burkholderia cepacia (strain R1808)).